The following is an 88-amino-acid chain: UPF0367 protein Tery_1229 (88 aa).

This sequence belongs to the UPF0367 family.

The protein is UPF0367 protein Tery_1229 of Trichodesmium erythraeum (strain IMS101).